A 131-amino-acid chain; its full sequence is Small ribosomal subunit protein uS8 (131 aa).

This sequence belongs to the universal ribosomal protein uS8 family. In terms of assembly, part of the 30S ribosomal subunit. Contacts proteins S5 and S12.

Functionally, one of the primary rRNA binding proteins, it binds directly to 16S rRNA central domain where it helps coordinate assembly of the platform of the 30S subunit. This Laribacter hongkongensis (strain HLHK9) protein is Small ribosomal subunit protein uS8.